The following is a 156-amino-acid chain: Small ribosomal subunit protein uS7 (156 aa).

This sequence belongs to the universal ribosomal protein uS7 family. Part of the 30S ribosomal subunit. Contacts proteins S9 and S11.

Its function is as follows. One of the primary rRNA binding proteins, it binds directly to 16S rRNA where it nucleates assembly of the head domain of the 30S subunit. Is located at the subunit interface close to the decoding center, probably blocks exit of the E-site tRNA. In Synechococcus sp. (strain JA-3-3Ab) (Cyanobacteria bacterium Yellowstone A-Prime), this protein is Small ribosomal subunit protein uS7.